The chain runs to 459 residues: Spermidine/putrescine import ATP-binding protein PotA (459 aa).

Residues 15–334 enclose the ABC transporter domain; that stretch reads IELIDIVKQF…PRNIWVAKFI (320 aa). 47–54 contributes to the ATP binding site; the sequence is GPSGSGKT. Residues 115-203 are insert; sequence RVPKENVKKE…EEFKNKYFKR (89 aa).

It belongs to the ABC transporter superfamily. Spermidine/putrescine importer (TC 3.A.1.11.1) family. In terms of assembly, the complex is composed of two ATP-binding proteins (PotA), two transmembrane proteins (PotB and PotC) and a solute-binding protein (PotD).

It is found in the cell membrane. It catalyses the reaction ATP + H2O + polyamine-[polyamine-binding protein]Side 1 = ADP + phosphate + polyamineSide 2 + [polyamine-binding protein]Side 1.. Part of the ABC transporter complex PotABCD involved in spermidine/putrescine import. Responsible for energy coupling to the transport system. The chain is Spermidine/putrescine import ATP-binding protein PotA from Mycoplasmopsis synoviae (strain 53) (Mycoplasma synoviae).